The sequence spans 417 residues: S-inosyl-L-homocysteine hydrolase (417 aa).

Residues Asp124 and Glu149 each contribute to the substrate site. Position 150-152 (150-152) interacts with NAD(+); that stretch reads TTT. Substrate-binding residues include Lys179 and Asp183. Residues Asn184, 213–218, Glu236, Asn271, 292–294, and Asn339 contribute to the NAD(+) site; these read GYGWCG and SGH.

The protein belongs to the adenosylhomocysteinase family. Requires NAD(+) as cofactor.

It localises to the cytoplasm. The enzyme catalyses S-inosyl-L-homocysteine + H2O = L-homocysteine + inosine. The protein operates within amino-acid biosynthesis; S-adenosyl-L-methionine biosynthesis. Functionally, catalyzes the hydrolysis of S-inosyl-L-homocysteine (SIH) to L-homocysteine (Hcy) and inosine. Likely functions in a S-adenosyl-L-methionine (SAM) recycling pathway from S-adenosyl-L-homocysteine (SAH) produced from SAM-dependent methylation reactions. Can also catalyze the reverse reaction in vitro, i.e. the synthesis of SIH from Hcy and inosine. The protein is S-inosyl-L-homocysteine hydrolase of Methanothermobacter thermautotrophicus (strain ATCC 29096 / DSM 1053 / JCM 10044 / NBRC 100330 / Delta H) (Methanobacterium thermoautotrophicum).